Reading from the N-terminus, the 274-residue chain is Cytochrome b-c1 complex subunit Rieske, mitochondrial (274 aa).

Residues 79 to 103 (SHTDVKVPDFSEYRRLEVLDSTKSS) lie on the Mitochondrial matrix side of the membrane. A helical membrane pass occupies residues 104–140 (RESSEARKGFSYLVTGVTTVGVAYAAKNAVTQFVSSM). The Mitochondrial intermembrane segment spans residues 141-274 (SASADVLALA…FTSDDMVIVG (134 aa)). In terms of domain architecture, Rieske spans 187 to 272 (EAAVELSQLR…YEFTSDDMVI (86 aa)). [2Fe-2S] cluster is bound by residues C217, H219, C236, H239, and S241. A disulfide bridge connects residues C222 and C238.

Belongs to the Rieske iron-sulfur protein family. As to quaternary structure, component of the ubiquinol-cytochrome c oxidoreductase (cytochrome b-c1 complex, complex III, CIII), a multisubunit enzyme composed of 11 subunits. The complex is composed of 3 respiratory subunits cytochrome b, cytochrome c1 and Rieske protein UQCRFS1, 2 core protein subunits UQCRC1/QCR1 and UQCRC2/QCR2, and 6 low-molecular weight protein subunits UQCRH/QCR6, UQCRB/QCR7, UQCRQ/QCR8, UQCR10/QCR9, UQCR11/QCR10 and subunit 9, the cleavage product of Rieske protein UQCRFS1. The complex exists as an obligatory dimer and forms supercomplexes (SCs) in the inner mitochondrial membrane with NADH-ubiquinone oxidoreductase (complex I, CI) and cytochrome c oxidase (complex IV, CIV), resulting in different assemblies (supercomplex SCI(1)III(2)IV(1) and megacomplex MCI(2)III(2)IV(2)). Incorporation of the Rieske protein UQCRFS1 is the penultimate step in complex III assembly. Interacts with TTC19, which is involved in the clearance of UQCRFS1 fragments. Component of the ubiquinol-cytochrome c oxidoreductase (cytochrome b-c1 complex, complex III, CIII). Subunit 9 corresponds to the mitochondrial targeting sequence (MTS) of Rieske protein UQCRFS1. It is retained after processing and incorporated inside complex III, where it remains bound to the complex and localizes between the 2 core subunits UQCRC1/QCR1 and UQCRC2/QCR2. [2Fe-2S] cluster is required as a cofactor. In terms of processing, proteolytic processing is necessary for the correct insertion of UQCRFS1 in the complex III dimer. Several fragments are generated during UQCRFS1 insertion, most probably due to the endogenous matrix-processing peptidase (MPP) activity of the 2 core protein subunits UQCRC1/QCR1 and UQCRC2/QCR2, which are homologous to the 2 mitochondrial-processing peptidase (MPP) subunits beta-MPP and alpha-MPP respectively. The action of the protease is also necessary for the clearance of the UQCRFS1 fragments.

Its subcellular location is the mitochondrion inner membrane. It carries out the reaction a quinol + 2 Fe(III)-[cytochrome c](out) = a quinone + 2 Fe(II)-[cytochrome c](out) + 2 H(+)(out). Component of the ubiquinol-cytochrome c oxidoreductase, a multisubunit transmembrane complex that is part of the mitochondrial electron transport chain which drives oxidative phosphorylation. The respiratory chain contains 3 multisubunit complexes succinate dehydrogenase (complex II, CII), ubiquinol-cytochrome c oxidoreductase (cytochrome b-c1 complex, complex III, CIII) and cytochrome c oxidase (complex IV, CIV), that cooperate to transfer electrons derived from NADH and succinate to molecular oxygen, creating an electrochemical gradient over the inner membrane that drives transmembrane transport and the ATP synthase. The cytochrome b-c1 complex catalyzes electron transfer from ubiquinol to cytochrome c, linking this redox reaction to translocation of protons across the mitochondrial inner membrane, with protons being carried across the membrane as hydrogens on the quinol. In the process called Q cycle, 2 protons are consumed from the matrix, 4 protons are released into the intermembrane space and 2 electrons are passed to cytochrome c. The Rieske protein is a catalytic core subunit containing a [2Fe-2S] iron-sulfur cluster. It cycles between 2 conformational states during catalysis to transfer electrons from the quinol bound in the Q(0) site in cytochrome b to cytochrome c1. Incorporation of UQCRFS1 is the penultimate step in complex III assembly. Functionally, component of the ubiquinol-cytochrome c oxidoreductase (cytochrome b-c1 complex, complex III, CIII). UQCRFS1 undergoes proteolytic processing once it is incorporated in the complex III dimer. One of the fragments, called subunit 9, corresponds to its mitochondrial targeting sequence (MTS). The proteolytic processing is necessary for the correct insertion of UQCRFS1 in the complex III dimer, but the persistence of UQCRFS1-derived fragments may prevent newly imported UQCRFS1 to be processed and assembled into complex III and is detrimental for the complex III structure and function. In Pan paniscus (Pygmy chimpanzee), this protein is Cytochrome b-c1 complex subunit Rieske, mitochondrial (UQCRFS1).